A 965-amino-acid chain; its full sequence is Vacuolar membrane protease (965 aa).

Over 1–16 the chain is Cytoplasmic; it reads MARPSLSPSNPLGFTP. The chain crosses the membrane as a helical span at residues 17–37; sequence WPVTVITAVVYLALVVPLLVV. The Vacuolar portion of the chain corresponds to 38 to 387; it reads HHVVPSAPSS…SAFVVFELHT (350 aa). N-linked (GlcNAc...) asparagine glycosylation is found at N53 and N119. Zn(2+) contacts are provided by H171 and D183. The active-site Proton acceptor is E217. Zn(2+)-binding residues include E218, E243, and H316. A helical membrane pass occupies residues 388–408; it reads LFALSVTLLVVAPLVLLVTSI. Over 409-441 the chain is Cytoplasmic; the sequence is ALARADKMYLFRSSASPEDSDGSEVVPLHGVRG. Residues 442 to 462 form a helical membrane-spanning segment; sequence FFRFPFLLVIPTAVTVGLAYL. The Vacuolar portion of the chain corresponds to 463–472; the sequence is VTKFNPYIIH. Residues 473 to 493 form a helical membrane-spanning segment; that stretch reads SSEYAVWSMMISAWVFLAWFV. The Cytoplasmic segment spans residues 494–507; that stretch reads SRVADFARPSAFHR. A helical transmembrane segment spans residues 508 to 528; it reads VYTLTWLFLVEWVFLVISTVY. The Vacuolar segment spans residues 529–532; sequence ENQY. The chain crosses the membrane as a helical span at residues 533 to 553; it reads GLAGGYFVLFVFAGTFLATWI. Over 554-661 the chain is Cytoplasmic; that stretch reads SYLELFALPR…WSIHLPKWVW (108 aa). A disordered region spans residues 577-610; that stretch reads RTSSHGSRLGTASGEDVEDGEDEDDDGTTAEATE. A compositionally biased stretch (acidic residues) spans 591–604; the sequence is EDVEDGEDEDDDGT. A helical membrane pass occupies residues 662–682; that stretch reads VLQFLLTAPLVLIFVGPLALL. Topologically, residues 683 to 698 are vacuolar; sequence LTSALRQTGQDGSPSL. The chain crosses the membrane as a helical span at residues 699–719; it reads FIYIAVAALTTLLFIPLLPFI. The Cytoplasmic segment spans residues 720-725; it reads HRYTHH. A helical transmembrane segment spans residues 726 to 746; that stretch reads IPLFLLCVFAGTLIYNLVAFP. The Vacuolar portion of the chain corresponds to 747–965; sequence FSPANRLKLF…LVEGSRRFEV (219 aa). N793 and N830 each carry an N-linked (GlcNAc...) asparagine glycan.

It belongs to the peptidase M28 family. The cofactor is Zn(2+).

The protein localises to the vacuole membrane. May be involved in vacuolar sorting and osmoregulation. This Aspergillus fumigatus (strain CBS 144.89 / FGSC A1163 / CEA10) (Neosartorya fumigata) protein is Vacuolar membrane protease.